The following is a 2318-amino-acid chain: Neurogenic locus notch homolog protein 3 (2318 aa).

Residues 1–14 (MGLGARGRRRRRRL) show a composition bias toward basic residues. Residues 1-20 (MGLGARGRRRRRRLMALPPP) are disordered. The N-terminal stretch at 1–39 (MGLGARGRRRRRRLMALPPPPPPMRALPLLLLLAGLGAA) is a signal peptide. EGF-like domains lie at 40-78 (APPCLDGSPCANGGRCTHQQPSLEAACLCLPGWVGERCQ), 79-119 (LEDP…PDCS), and 120-157 (QPDPCVSRPCVHGAPCSVGPDGRFACACPPGYQGQSCQ). Over 40–1643 (APPCLDGSPC…PLEAPEQSVP (1604 aa)) the chain is Extracellular. Disulfide bonds link Cys-43–Cys-55, Cys-49–Cys-66, Cys-68–Cys-77, Cys-83–Cys-94, Cys-88–Cys-107, Cys-109–Cys-118, Cys-124–Cys-135, Cys-129–Cys-145, Cys-147–Cys-156, Cys-163–Cys-175, Cys-169–Cys-184, Cys-186–Cys-195, Cys-202–Cys-213, Cys-207–Cys-223, Cys-225–Cys-234, Cys-241–Cys-252, Cys-246–Cys-261, Cys-263–Cys-272, Cys-279–Cys-292, Cys-286–Cys-301, Cys-303–Cys-312, Cys-319–Cys-330, Cys-324–Cys-339, Cys-341–Cys-350, Cys-356–Cys-367, Cys-361–Cys-378, Cys-380–Cys-389, Cys-396–Cys-409, Cys-403–Cys-418, Cys-420–Cys-429, Cys-436–Cys-447, Cys-441–Cys-456, Cys-458–Cys-467, Cys-474–Cys-485, Cys-479–Cys-494, Cys-496–Cys-505, Cys-512–Cys-523, Cys-517–Cys-532, Cys-534–Cys-543, Cys-550–Cys-560, Cys-555–Cys-569, Cys-571–Cys-580, Cys-587–Cys-598, Cys-592–Cys-607, Cys-609–Cys-618, Cys-625–Cys-635, Cys-630–Cys-644, Cys-646–Cys-655, Cys-662–Cys-673, Cys-667–Cys-682, Cys-684–Cys-693, Cys-700–Cys-710, Cys-705–Cys-719, Cys-721–Cys-730, Cys-739–Cys-750, Cys-744–Cys-759, Cys-761–Cys-770, Cys-776–Cys-787, Cys-781–Cys-797, Cys-799–Cys-808, Cys-815–Cys-827, Cys-821–Cys-836, Cys-838–Cys-847, Cys-854–Cys-865, Cys-859–Cys-874, Cys-876–Cys-885, Cys-892–Cys-902, Cys-897–Cys-911, Cys-913–Cys-922, Cys-929–Cys-940, Cys-934–Cys-949, Cys-951–Cys-960, Cys-967–Cys-978, Cys-972–Cys-987, Cys-989–Cys-998, Cys-1005–Cys-1016, Cys-1010–Cys-1023, Cys-1025–Cys-1034, Cys-1041–Cys-1062, Cys-1056–Cys-1071, Cys-1073–Cys-1082, Cys-1089–Cys-1100, Cys-1094–Cys-1109, Cys-1111–Cys-1120, Cys-1127–Cys-1138, Cys-1132–Cys-1147, Cys-1149–Cys-1158, Cys-1165–Cys-1183, Cys-1177–Cys-1192, Cys-1194–Cys-1203, Cys-1210–Cys-1223, Cys-1215–Cys-1233, Cys-1235–Cys-1244, Cys-1251–Cys-1262, Cys-1256–Cys-1276, Cys-1278–Cys-1287, Cys-1294–Cys-1305, Cys-1299–Cys-1314, and Cys-1316–Cys-1325. One can recognise an EGF-like 4; calcium-binding domain in the interval 159–196 (DIDECRSGTTCRHGGTCLNTPGSFRCQCPLGYTGLLCE). The region spanning 198-235 (PVVPCAPSPCRNGGTCRQSSDVTYDCACLPGFEGQNCE) is the EGF-like 5 domain. The 37-residue stretch at 237–273 (NVDDCPGHRCLNGGTCVDGVNTYNCQCPPEWTGQFCT) folds into the EGF-like 6; calcium-binding domain. The EGF-like 7 domain maps to 275–313 (DVDECQLQPNACHNGGTCFNLLGGHSCVCVNGWTGESCS). One can recognise an EGF-like 8; calcium-binding domain in the interval 315–351 (NIDDCATAVCFHGATCHDRVASFYCACPMGKTGLLCH). The 39-residue stretch at 352-390 (LDDACVSNPCHEDAICDTNPVSGRAICTCPPGFTGGACD) folds into the EGF-like 9 domain. The EGF-like 10; calcium-binding domain occupies 392–430 (DVDECSIGANPCEHLGRCVNTQGSFLCQCGRGYTGPRCE). An EGF-like 11; calcium-binding domain is found at 432–468 (DVNECLSGPCRNQATCLDRIGQFTCICMAGFTGTYCE). An EGF-like 12; calcium-binding domain is found at 470–506 (DIDECQSSPCVNGGVCKDRVNGFSCTCPSGFSGSMCQ). In terms of domain architecture, EGF-like 13; calcium-binding spans 508-544 (DVDECASTPCRNGAKCVDQPDGYECRCAEGFEGTLCE). In terms of domain architecture, EGF-like 14; calcium-binding spans 546-581 (NVDDCSPDPCHHGRCVDGIASFSCACAPGYTGIRCE). Residues 583–619 (QVDECRSQPCRYGGKCLDLVDKYLCRCPPGTTGVNCE) form the EGF-like 15; calcium-binding domain. In terms of domain architecture, EGF-like 16; calcium-binding spans 621-656 (NIDDCASNPCTFGVCRDGINRYDCVCQPGFTGPLCN). The EGF-like 17; calcium-binding domain occupies 658–694 (EINECASSPCGEGGSCVDGENGFHCLCPPGSLPPLCL). 3 EGF-like domains span residues 696 to 731 (ANHPCAHKPCSHGVCHDAPGGFRCVCEPGWSGPRCS), 735 to 771 (APDACESQPCQAGGTCTSDGIGFRCTCAPGFQGHQCE), and 772 to 809 (VLSPCTPSLCEHGGHCESDPDRLTVCSCPPGWQGPRCQ). The region spanning 811-848 (DVDECAGASPCGPHGTCTNLPGNFRCICHRGYTGPFCD) is the EGF-like 21; calcium-binding domain. The 37-residue stretch at 850-886 (DIDDCDPNPCLHGGSCQDGVGSFSCSCLDGFAGPRCA) folds into the EGF-like 22; calcium-binding domain. One can recognise an EGF-like 23; calcium-binding domain in the interval 888-923 (DVDECLSSPCGPGTCTDHVASFTCACPPGYGGFHCE). EGF-like domains lie at 925–961 (DLPDCSPSSCFNGGTCVDGVSSFSCLCRPGYTGTHCQ), 963–999 (EADPCFSRPCLHGGICNPTHPGFECTCREGFTGSQCQ), 1001–1035 (PVDWCSQAPCQNGGRCVQTGAYCICPPGWSGRLCD), 1037–1083 (QSLP…SHCE), and 1085–1121 (EVDPCTAQPCQHGGTCRGYMGGYVCECPAGYAGDSCE). One can recognise an EGF-like 29; calcium-binding domain in the interval 1123–1159 (NIDECASQPCQNGGSCIDLVARYLCSCPPGTLGVLCE). The EGF-like 30; calcium-binding domain occupies 1161–1204 (NEDDCDLGPSLDSGVQCLHNGTCVDLVGGFRCNCPPGYTGLHCE). N-linked (GlcNAc...) asparagine glycosylation occurs at Asn-1180. 4 consecutive EGF-like domains span residues 1206–1245 (DINECRPGACHAAHTRDCLQDPGGHFRCVCHPGFTGPRCQ), 1247–1288 (ALSP…LRCE), 1290–1326 (VARSCRELQCPVGIPCQQTARGPRCACPPGLSGPSCR), and 1336–1374 (TNASCASAPCLHGGSCLPVQSVPFFRCVCAPGWGGPRCE). The N-linked (GlcNAc...) asparagine glycan is linked to Asn-1337. 12 disulfide bridges follow: Cys-1340/Cys-1351, Cys-1345/Cys-1362, Cys-1364/Cys-1373, Cys-1388/Cys-1411, Cys-1393/Cys-1406, Cys-1402/Cys-1418, Cys-1429/Cys-1452, Cys-1434/Cys-1447, Cys-1443/Cys-1459, Cys-1468/Cys-1494, Cys-1476/Cys-1489, and Cys-1485/Cys-1501. 3 LNR repeats span residues 1388–1428 (CPRA…PWRQ), 1429–1466 (CEALQCWRLFNNSRCDPACSSPACLYDNFDCYSGGRDR), and 1468–1506 (CNPVYEKYCADHFADGRCDQGCNTEECGWDGLDCASEVP). An N-linked (GlcNAc...) asparagine glycan is attached at Asn-1439. A helical transmembrane segment spans residues 1644 to 1664 (LLPLLVAGAVFLLIIFILGVM). The Cytoplasmic portion of the chain corresponds to 1665–2318 (VARRKREHST…EVTPKRQVMA (654 aa)). ANK repeat units lie at residues 1839–1868 (TGETALHLAARYARADAAKRLLDAGADTNA), 1872–1902 (SGRTPLHTAVTADAQGVFQILIRNRSTDLDA), 1906–1935 (DGSTALILAARLAVEGMVEELIASHADVNA), 1939–1968 (LGKSALHWAAAVNNVEATLALLKNGANKDM), and 1972–2001 (KEETPLFLAAREGSYEAAKLLLDHLANREI). 2 disordered regions span residues 2025 to 2045 (LDQPSGPRSPSGPHGLGPLLC) and 2058 to 2126 (QSGT…PLEG). The segment covering 2028-2045 (PSGPRSPSGPHGLGPLLC) has biased composition (low complexity). An Omega-N-methylarginine modification is found at Arg-2174. The span at 2184 to 2193 (SFLLPLAPGP) shows a compositional bias: low complexity. The interval 2184–2318 (SFLLPLAPGP…EVTPKRQVMA (135 aa)) is disordered. The tract at residues 2242–2261 (HPYLTPSPESPEHWASPSPP) is PEST-like. The segment covering 2262–2282 (SLSDWSDSTPSPATATNATAS) has biased composition (low complexity). Residues 2296–2305 (SLPQSQTQLG) are compositionally biased toward polar residues.

Belongs to the NOTCH family. As to quaternary structure, interacts with PSMA1. Heterodimer of a C-terminal fragment N(TM) and a N-terminal fragment N(EC) which are probably linked by disulfide bonds. Interacts with MAML1, MAML2 and MAML3 which act as transcriptional coactivators for NOTCH3. Interacts with HIF1AN. Synthesized in the endoplasmic reticulum as an inactive form which is proteolytically cleaved by a furin-like convertase in the trans-Golgi network before it reaches the plasma membrane to yield an active, ligand-accessible form. Cleavage results in a C-terminal fragment N(TM) and a N-terminal fragment N(EC). Following ligand binding, it is cleaved by TNF-alpha converting enzyme (TACE) to yield a membrane-associated intermediate fragment called notch extracellular truncation (NEXT). This fragment is then cleaved by presenilin dependent gamma-secretase to release a notch-derived peptide containing the intracellular domain (NICD) from the membrane. Post-translationally, phosphorylated. In terms of processing, hydroxylated by HIF1AN. As to expression, proliferating neuroepithelium.

It localises to the cell membrane. The protein localises to the nucleus. Functions as a receptor for membrane-bound ligands Jagged1, Jagged2 and Delta1 to regulate cell-fate determination. Upon ligand activation through the released notch intracellular domain (NICD) it forms a transcriptional activator complex with RBPJ/RBPSUH and activates genes of the enhancer of split locus. Affects the implementation of differentiation, proliferation and apoptotic programs. May play a role during CNS development. This Mus musculus (Mouse) protein is Neurogenic locus notch homolog protein 3 (Notch3).